The primary structure comprises 28 residues: uncharacterized protein (28 aa).

The protein localises to the cell inner membrane. This is an uncharacterized protein from Escherichia coli (strain K12).